We begin with the raw amino-acid sequence, 495 residues long: Probable staphylococcal-like nuclease CAN4 (495 aa).

A lipid anchor (N-myristoyl glycine) is attached at G2. The S-palmitoyl cysteine moiety is linked to residue C11. Disordered stretches follow at residues 45-68 (DLQV…RPAL) and 81-101 (LQVP…PPRP). Residues 50–66 (LSPPPPSTRQQQPPPRP) are compositionally biased toward pro residues. One can recognise a TNase-like domain in the interval 297 to 470 (KTLPVNAKCI…RDARQGLWAY (174 aa)). A Ca(2+)-binding site is contributed by D310. R377 is an active-site residue. D382 contacts Ca(2+). Catalysis depends on residues E385 and R419.

This sequence belongs to the thermonuclease family. It depends on Ca(2+) as a cofactor.

The protein localises to the cell membrane. In terms of biological role, enzyme that catalyzes the hydrolysis of both DNA and RNA at the 5' position of the phosphodiester bond. The polypeptide is Probable staphylococcal-like nuclease CAN4 (Oryza sativa subsp. japonica (Rice)).